Consider the following 168-residue polypeptide: Small ribosomal subunit protein uS5 (168 aa).

Residues I13–V76 enclose the S5 DRBM domain.

This sequence belongs to the universal ribosomal protein uS5 family. As to quaternary structure, part of the 30S ribosomal subunit. Contacts proteins S4 and S8.

In terms of biological role, with S4 and S12 plays an important role in translational accuracy. Its function is as follows. Located at the back of the 30S subunit body where it stabilizes the conformation of the head with respect to the body. The polypeptide is Small ribosomal subunit protein uS5 (Coxiella burnetii (strain RSA 493 / Nine Mile phase I)).